The chain runs to 756 residues: 1-phosphatidylinositol 4,5-bisphosphate phosphodiesterase delta-1 (756 aa).

A PH domain is found at 21–130; that stretch reads ALLKGSQLLK…WVQGLRKIIH (110 aa). Positions 30 to 57 are substrate binding; that stretch reads KVKSSSWRRERFYKLQEDCKTIWQESRK. EF-hand domains are found at residues 140–175 and 176–211; these read KLQHWIHSCLRKADKNKDNKMNFKELKDFLKELNIQ and VDDGYARKIFRECDHSQTDSLEDEEIETFYKMLTQR. The Ca(2+) site is built by Asp-153, Asn-155, Asp-157, Lys-159, Glu-164, Asp-189, Ser-191, Thr-193, Ser-195, and Glu-200. Ser-191 carries an O-linked (GlcNAc) serine glycan. O-linked (GlcNAc) threonine glycosylation is present at Thr-193. A PI-PLC X-box domain is found at 296–440; the sequence is QDMDQPLSHY…LKGKILLKGK (145 aa). His-311 is an active-site residue. 3 residues coordinate Ca(2+): Asn-312, Glu-341, and Asp-343. His-356 is an active-site residue. Position 390 (Glu-390) interacts with Ca(2+). Lys-438 and Lys-440 together coordinate substrate. Thr-457 carries the post-translational modification Phosphothreonine. Ser-460 carries the phosphoserine modification. The PI-PLC Y-box domain occupies 492–609; it reads LSDMIIYCKS…GYVLKPAFLR (118 aa). Substrate-binding residues include Ser-522 and Arg-549. The 129-residue stretch at 609 to 737 folds into the C2 domain; that stretch reads RDPNTTFNSR…QGYRHVHLLS (129 aa). Ca(2+) is bound by residues Ile-651, Asp-653, Asn-677, Asp-706, Tyr-707, and Asp-708.

In terms of assembly, interacts with TGM2. Ca(2+) serves as cofactor.

The catalysed reaction is a 1,2-diacyl-sn-glycero-3-phospho-(1D-myo-inositol-4,5-bisphosphate) + H2O = 1D-myo-inositol 1,4,5-trisphosphate + a 1,2-diacyl-sn-glycerol + H(+). The enzyme catalyses a 1,2-diacyl-sn-glycero-3-phospho-(1D-myo-inositol) + H2O = 1D-myo-inositol 1-phosphate + a 1,2-diacyl-sn-glycerol + H(+). Functionally, the production of the second messenger molecules diacylglycerol (DAG) and inositol 1,4,5-trisphosphate (IP3) is mediated by activated phosphatidylinositol-specific phospholipase C enzymes. Essential for trophoblast and placental development. Binds phosphatidylinositol 4,5-bisphosphate. The chain is 1-phosphatidylinositol 4,5-bisphosphate phosphodiesterase delta-1 from Rattus norvegicus (Rat).